The following is a 380-amino-acid chain: Protein-tyrosine sulfotransferase A (380 aa).

The Cytoplasmic portion of the chain corresponds to 1-6; sequence MRKNRE. Residues 7–27 form a helical; Signal-anchor for type II membrane protein membrane-spanning segment; the sequence is LLLVLFLVVFILFYFITARTA. The Lumenal segment spans residues 28 to 380; that stretch reads DDPYYSNHRE…PIVDNEVSKL (353 aa). A glycan (N-linked (GlcNAc...) asparagine) is linked at N66. Residue 79–83 participates in 3'-phosphoadenylyl sulfate binding; the sequence is RSGTT. C97 and C157 are disulfide-bonded. E100 functions as the Proton donor/acceptor in the catalytic mechanism. The interval 102-106 is interaction with peptide substrate; sequence RVIPR. 3 residues coordinate 3'-phosphoadenylyl sulfate: R184, S192, and R196. The cysteines at positions 226 and 234 are disulfide-linked. 3'-phosphoadenylyl sulfate is bound by residues Y239, 284 to 293, and K299; that span reads SSDQVVKPVN.

This sequence belongs to the protein sulfotransferase family.

Its subcellular location is the golgi apparatus membrane. The enzyme catalyses L-tyrosyl-[protein] + 3'-phosphoadenylyl sulfate = O-sulfo-L-tyrosine-[protein] + adenosine 3',5'-bisphosphate + H(+). Catalyzes the O-sulfation of tyrosine residues within acidic motifs of polypeptides, using 3'-phosphoadenylyl sulfate (PAPS) as cosubstrate. The protein is Protein-tyrosine sulfotransferase A (tpst-1) of Caenorhabditis elegans.